Reading from the N-terminus, the 91-residue chain is Large ribosomal subunit protein bL31B (91 aa).

Belongs to the bacterial ribosomal protein bL31 family. Type B subfamily. Part of the 50S ribosomal subunit.

This chain is Large ribosomal subunit protein bL31B, found in Neisseria meningitidis serogroup A / serotype 4A (strain DSM 15465 / Z2491).